Consider the following 129-residue polypeptide: MSTPTHNLPRTRVSAFCWVALERSTRIERPTSWSWKELSHYSLIVFHCIPDTTPKQIEECFKKFLRRPDIVIILINQVYADMIRPTVDAHNLAVPTVLEIPSKQHPYDSSRDSILKRAQRVITPPERHY.

The protein belongs to the V-ATPase F subunit family. V-ATPase is a heteromultimeric enzyme made up of two complexes: the ATP-hydrolytic V1 complex and the proton translocation V0 complex. The V1 complex consists of three catalytic AB heterodimers that form a heterohexamer, three peripheral stalks each consisting of EG heterodimers, one central rotor including subunits D and F, and the regulatory subunits C and H. The proton translocation complex V0 consists of the proton transport subunit a, a ring of proteolipid subunits c9c'', rotary subunit d, subunits e and f, and the accessory subunits VhaAC45 and ATP6AP2.

Its function is as follows. Subunit of the V1 complex of vacuolar(H+)-ATPase (V-ATPase), a multisubunit enzyme composed of a peripheral complex (V1) that hydrolyzes ATP and a membrane integral complex (V0) that translocates protons. V-ATPase is responsible for acidifying and maintaining the pH of intracellular compartments and in some cell types, is targeted to the plasma membrane, where it is responsible for acidifying the extracellular environment. This chain is V-type proton ATPase subunit F 2 (Vha14-2), found in Drosophila melanogaster (Fruit fly).